We begin with the raw amino-acid sequence, 418 residues long: Cytochrome P450 monooxygenase ABA2 (418 aa).

Heme is bound at residue cysteine 355.

This sequence belongs to the cytochrome P450 family. The cofactor is heme.

It participates in hormone biosynthesis. Its function is as follows. Cytochrome P450 monooxygenase involved in the biosynthesis of abscisic acid (ABA), a phytohormone that acts antagonistically toward salicylic acid (SA), jasmonic acid (JA) and ethylene (ETH) signaling, to impede plant defense responses. During pathogen-host interaction, ABA plays a dual role in disease severity by increasing plant susceptibility and accelerating pathogenesis in the fungus itself. The first step of the pathway catalyzes the reaction from farnesyl diphosphate to alpha-ionylideneethane performed by the alpha-ionylideneethane synthase ABA3 via a three-step reaction mechanism involving 2 neutral intermediates, beta-farnesene and allofarnesene. The cytochrome P450 monooxygenase ABA1 might then be involved in the conversion of alpha-ionylideneethane to alpha-ionylideneacetic acid. Alpha-ionylideneacetic acid is further converted to abscisic acid in 2 steps involving the cytochrome P450 monooxygenase ABA2 and the short-chain dehydrogenase/reductase ABA4, via the intermediates 1'-deoxy-ABA or 1',4'-trans-diol-ABA, depending on the order of action of these 2 enzymes. ABA2 is responsible for the hydroxylation of carbon atom C-1' and ABA4 might be involved in the oxidation of the C-4' carbon atom. The protein is Cytochrome P450 monooxygenase ABA2 of Pyricularia oryzae (strain Y34) (Rice blast fungus).